Reading from the N-terminus, the 467-residue chain is Spermatogenesis- and oogenesis-specific basic helix-loop-helix-containing protein 2 (467 aa).

The region spanning 200–251 (QASFLHSTKEKLRRERIKSCCEQLRTLLPYVKGRKSDVASVIEATVDYVKQV) is the bHLH domain. Over residues 443 to 453 (ASASDHQASQP) the composition is skewed to low complexity. Residues 443–467 (ASASDHQASQPPALPSPQPHDSSYF) form a disordered region.

Forms both hetero- and homodimers with SOHLH1. Preferentially expressed in the adult ovary and testis. Expressed in the majority of spermatogonia in adult animals, but not in the most undifferentiated spermatogonial population.

The protein resides in the nucleus. It is found in the cytoplasm. Its function is as follows. Transcription regulator of both male and female germline differentiation. Suppresses genes involved in spermatogonial stem cells maintenance, and induces genes important for spermatogonial differentiation. Coordinates oocyte differentiation without affecting meiosis I. In Mus musculus (Mouse), this protein is Spermatogenesis- and oogenesis-specific basic helix-loop-helix-containing protein 2 (Sohlh2).